Consider the following 343-residue polypeptide: Dihydroorotase (343 aa).

Positions 13 and 15 each coordinate Zn(2+). Residues 15 to 17 (HFR) and Asn41 contribute to the substrate site. Lys98, His135, and His173 together coordinate Zn(2+). Lys98 carries the post-translational modification N6-carboxylysine. His135 contacts substrate. Substrate is bound at residue Leu218. A Zn(2+)-binding site is contributed by Asp246. Residue Asp246 is part of the active site. 2 residues coordinate substrate: His250 and Ala262.

The protein belongs to the metallo-dependent hydrolases superfamily. DHOase family. Class II DHOase subfamily. Homodimer. It depends on Zn(2+) as a cofactor.

The enzyme catalyses (S)-dihydroorotate + H2O = N-carbamoyl-L-aspartate + H(+). It functions in the pathway pyrimidine metabolism; UMP biosynthesis via de novo pathway; (S)-dihydroorotate from bicarbonate: step 3/3. Catalyzes the reversible cyclization of carbamoyl aspartate to dihydroorotate. This is Dihydroorotase from Marinomonas sp. (strain MWYL1).